A 100-amino-acid chain; its full sequence is NADH-quinone oxidoreductase subunit K 2 (100 aa).

3 helical membrane passes run leucine 4–valine 24, isoleucine 29–phenylalanine 49, and isoleucine 60–methionine 80.

Belongs to the complex I subunit 4L family. As to quaternary structure, NDH-1 is composed of 14 different subunits. Subunits NuoA, H, J, K, L, M, N constitute the membrane sector of the complex.

It localises to the cell inner membrane. The enzyme catalyses a quinone + NADH + 5 H(+)(in) = a quinol + NAD(+) + 4 H(+)(out). Its function is as follows. NDH-1 shuttles electrons from NADH, via FMN and iron-sulfur (Fe-S) centers, to quinones in the respiratory chain. The immediate electron acceptor for the enzyme in this species is believed to be ubiquinone. Couples the redox reaction to proton translocation (for every two electrons transferred, four hydrogen ions are translocated across the cytoplasmic membrane), and thus conserves the redox energy in a proton gradient. In Geotalea uraniireducens (strain Rf4) (Geobacter uraniireducens), this protein is NADH-quinone oxidoreductase subunit K 2.